The following is a 292-amino-acid chain: 4-hydroxy-tetrahydrodipicolinate synthase (292 aa).

T45 contacts pyruvate. Residue Y133 is the Proton donor/acceptor of the active site. K161 (schiff-base intermediate with substrate) is an active-site residue. Position 203 (I203) interacts with pyruvate.

Belongs to the DapA family. Homotetramer; dimer of dimers.

It is found in the cytoplasm. The enzyme catalyses L-aspartate 4-semialdehyde + pyruvate = (2S,4S)-4-hydroxy-2,3,4,5-tetrahydrodipicolinate + H2O + H(+). Its pathway is amino-acid biosynthesis; L-lysine biosynthesis via DAP pathway; (S)-tetrahydrodipicolinate from L-aspartate: step 3/4. Functionally, catalyzes the condensation of (S)-aspartate-beta-semialdehyde [(S)-ASA] and pyruvate to 4-hydroxy-tetrahydrodipicolinate (HTPA). This chain is 4-hydroxy-tetrahydrodipicolinate synthase, found in Vibrio cholerae serotype O1 (strain M66-2).